Consider the following 258-residue polypeptide: Homeobox-leucine zipper protein ATHB-7 (258 aa).

Positions Asn29–Gln88 form a DNA-binding region, homeobox. A leucine-zipper region spans residues Leu89–Leu124. Positions Ser149–Val183 are disordered. Positions Thr151–Val183 are enriched in basic and acidic residues.

Belongs to the HD-ZIP homeobox family. Class I subfamily. As to quaternary structure, interacts with TBP2 and TFIIB1. In terms of tissue distribution, widely expressed.

It is found in the nucleus. Probable transcription activator that may act as growth regulators in response to water deficit. This chain is Homeobox-leucine zipper protein ATHB-7 (ATHB-7), found in Arabidopsis thaliana (Mouse-ear cress).